Reading from the N-terminus, the 77-residue chain is U8-lycotoxin-Ls1g (77 aa).

A signal peptide spans 1 to 20 (MKLIIFTGLVLFAIVSLIEV). Positions 21 to 26 (QADNER) are excised as a propeptide.

This sequence belongs to the neurotoxin 19 (CSTX) family. 08 (U8-Lctx) subfamily. Post-translationally, contains 4 disulfide bonds. As to expression, expressed by the venom gland.

The protein localises to the secreted. This is U8-lycotoxin-Ls1g from Lycosa singoriensis (Wolf spider).